The sequence spans 501 residues: uncharacterized protein (501 aa).

Glu236 serves as the catalytic Proton donor. The active-site Nucleophile is the Glu333.

This sequence belongs to the glycosyl hydrolase 5 (cellulase A) family.

The protein resides in the mitochondrion intermembrane space. This is an uncharacterized protein from Saccharomyces cerevisiae (strain ATCC 204508 / S288c) (Baker's yeast).